A 316-amino-acid polypeptide reads, in one-letter code: Low affinity immunoglobulin gamma Fc region receptor II-a (316 aa).

The N-terminal stretch at 1-35 (MAMETQMSQNVCPRNLWLLQPLTVLLLLASADSQA) is a signal peptide. The Extracellular portion of the chain corresponds to 36-216 (APPKAVLKLE…PSVGSSSPVG (181 aa)). Ig-like C2-type domains follow at residues 38–117 (PKAV…VHLT) and 121–203 (EWLV…VTIT). Intrachain disulfides connect Cys-61–Cys-103 and Cys-142–Cys-186. 3 N-linked (GlcNAc...) asparagine glycosylation sites follow: Asn-96, Asn-170, and Asn-177. A helical membrane pass occupies residues 217–239 (IIVAVVIATAVAAIVAAVVALIY). Over 240 to 316 (CRKKRISANS…PPNDHVNSNN (77 aa)) the chain is Cytoplasmic. Tyr-287 and Tyr-303 each carry phosphotyrosine; by SRC-type Tyr-kinases.

As to quaternary structure, interacts with INPP5D/SHIP1 and INPPL1/SHIP2, regulating its function. Interacts with APCS and FGR. Interacts with HCK. Post-translationally, phosphorylated by SRC-type Tyr-kinases such as HCK, LYN, BLK, FYN and SYK.

It is found in the cell membrane. In terms of biological role, binds to the Fc region of immunoglobulins gamma. Low affinity receptor. By binding to IgG it initiates cellular responses against pathogens and soluble antigens. Promotes phagocytosis of opsonized antigens. The polypeptide is Low affinity immunoglobulin gamma Fc region receptor II-a (FCGR2A) (Pan troglodytes (Chimpanzee)).